Consider the following 228-residue polypeptide: Ribonuclease HII (228 aa).

An RNase H type-2 domain is found at 1–210 (MKIAGIDEAG…LKKIAEKVES (210 aa)). A divalent metal cation-binding residues include D7, E8, and D105.

This sequence belongs to the RNase HII family. Monomer. It depends on Mn(2+) as a cofactor. The cofactor is Mg(2+).

It localises to the cytoplasm. The enzyme catalyses Endonucleolytic cleavage to 5'-phosphomonoester.. Functionally, endonuclease that specifically degrades the RNA of RNA-DNA hybrids. This Thermococcus kodakarensis (strain ATCC BAA-918 / JCM 12380 / KOD1) (Pyrococcus kodakaraensis (strain KOD1)) protein is Ribonuclease HII (rnhB).